A 286-amino-acid polypeptide reads, in one-letter code: Phosphatidylserine decarboxylase proenzyme (286 aa).

Catalysis depends on charge relay system; for autoendoproteolytic cleavage activity residues aspartate 88, histidine 145, and serine 251. Serine 251 functions as the Schiff-base intermediate with substrate; via pyruvic acid; for decarboxylase activity in the catalytic mechanism. Position 251 is a pyruvic acid (Ser); by autocatalysis (serine 251).

Belongs to the phosphatidylserine decarboxylase family. PSD-B subfamily. Prokaryotic type I sub-subfamily. In terms of assembly, heterodimer of a large membrane-associated beta subunit and a small pyruvoyl-containing alpha subunit. The cofactor is pyruvate. Is synthesized initially as an inactive proenzyme. Formation of the active enzyme involves a self-maturation process in which the active site pyruvoyl group is generated from an internal serine residue via an autocatalytic post-translational modification. Two non-identical subunits are generated from the proenzyme in this reaction, and the pyruvate is formed at the N-terminus of the alpha chain, which is derived from the carboxyl end of the proenzyme. The autoendoproteolytic cleavage occurs by a canonical serine protease mechanism, in which the side chain hydroxyl group of the serine supplies its oxygen atom to form the C-terminus of the beta chain, while the remainder of the serine residue undergoes an oxidative deamination to produce ammonia and the pyruvoyl prosthetic group on the alpha chain. During this reaction, the Ser that is part of the protease active site of the proenzyme becomes the pyruvoyl prosthetic group, which constitutes an essential element of the active site of the mature decarboxylase.

It localises to the cell membrane. The enzyme catalyses a 1,2-diacyl-sn-glycero-3-phospho-L-serine + H(+) = a 1,2-diacyl-sn-glycero-3-phosphoethanolamine + CO2. It functions in the pathway phospholipid metabolism; phosphatidylethanolamine biosynthesis; phosphatidylethanolamine from CDP-diacylglycerol: step 2/2. In terms of biological role, catalyzes the formation of phosphatidylethanolamine (PtdEtn) from phosphatidylserine (PtdSer). The protein is Phosphatidylserine decarboxylase proenzyme of Verminephrobacter eiseniae (strain EF01-2).